The chain runs to 334 residues: Holliday junction branch migration complex subunit RuvB (334 aa).

Positions 1-181 are large ATPase domain (RuvB-L); sequence MQDRLISGTE…FGIVQRLEFY (181 aa). Residues I20, R21, G62, K65, T66, T67, 128–130, R171, Y181, and R218 each bind ATP; that span reads EDY. T66 is a binding site for Mg(2+). The tract at residues 182-252 is small ATPAse domain (RuvB-S); that stretch reads SVEDLTHIVS…MAQRALDMLN (71 aa). Residues 255–334 form a head domain (RuvB-H) region; it reads KAGLDTLDRR…FGMTPPEPKN (80 aa). DNA is bound by residues R310 and R315.

It belongs to the RuvB family. As to quaternary structure, homohexamer. Forms an RuvA(8)-RuvB(12)-Holliday junction (HJ) complex. HJ DNA is sandwiched between 2 RuvA tetramers; dsDNA enters through RuvA and exits via RuvB. An RuvB hexamer assembles on each DNA strand where it exits the tetramer. Each RuvB hexamer is contacted by two RuvA subunits (via domain III) on 2 adjacent RuvB subunits; this complex drives branch migration. In the full resolvosome a probable DNA-RuvA(4)-RuvB(12)-RuvC(2) complex forms which resolves the HJ.

The protein localises to the cytoplasm. It catalyses the reaction ATP + H2O = ADP + phosphate + H(+). In terms of biological role, the RuvA-RuvB-RuvC complex processes Holliday junction (HJ) DNA during genetic recombination and DNA repair, while the RuvA-RuvB complex plays an important role in the rescue of blocked DNA replication forks via replication fork reversal (RFR). RuvA specifically binds to HJ cruciform DNA, conferring on it an open structure. The RuvB hexamer acts as an ATP-dependent pump, pulling dsDNA into and through the RuvAB complex. RuvB forms 2 homohexamers on either side of HJ DNA bound by 1 or 2 RuvA tetramers; 4 subunits per hexamer contact DNA at a time. Coordinated motions by a converter formed by DNA-disengaged RuvB subunits stimulates ATP hydrolysis and nucleotide exchange. Immobilization of the converter enables RuvB to convert the ATP-contained energy into a lever motion, pulling 2 nucleotides of DNA out of the RuvA tetramer per ATP hydrolyzed, thus driving DNA branch migration. The RuvB motors rotate together with the DNA substrate, which together with the progressing nucleotide cycle form the mechanistic basis for DNA recombination by continuous HJ branch migration. Branch migration allows RuvC to scan DNA until it finds its consensus sequence, where it cleaves and resolves cruciform DNA. This Acinetobacter baumannii (strain AB307-0294) protein is Holliday junction branch migration complex subunit RuvB.